A 170-amino-acid polypeptide reads, in one-letter code: Urease accessory protein UreE (170 aa).

The protein belongs to the UreE family.

The protein resides in the cytoplasm. Functionally, involved in urease metallocenter assembly. Binds nickel. Probably functions as a nickel donor during metallocenter assembly. The polypeptide is Urease accessory protein UreE (Helicobacter pylori (strain Shi470)).